The chain runs to 331 residues: Cytosolic arginine sensor for mTORC1 subunit 1 (331 aa).

Position 14 is a phosphoserine (serine 14). 2 ACT domains span residues 72-137 and 259-320; these read AEAT…HTLA and GELW…DILQ. L-arginine-binding positions include 110–111, glycine 273, 279–280, and 299–303; these read SV, IV, and TFNFD.

Belongs to the GATS family. In terms of assembly, forms homodimers and heterodimers with CASTOR2. Interacts with the GATOR2 complex which is composed of MIOS, SEC13, SEH1L, WDR24 and WDR59; the interaction is negatively regulated by arginine. Interacts with TM4SF5; the interaction is positively regulated by leucine and is negatively regulated by arginine. Post-translationally, phosphorylation at Ser-14 by AKT1, promoting the interaction between CASTOR1 and RNF167. Ubiquitinated by RNF167 via 'Lys-29'-polyubiquitination, leading to its degradation, releasing the GATOR2 complex. Ubiquitination by RNF167 is promoted by phosphorylation at Ser-14 by AKT1.

It is found in the cytoplasm. Its subcellular location is the cytosol. In terms of biological role, functions as an intracellular arginine sensor within the amino acid-sensing branch of the TORC1 signaling pathway. As a homodimer or a heterodimer with CASTOR2, binds and inhibits the GATOR subcomplex GATOR2 and thereby mTORC1. Binding of arginine to CASTOR1 allosterically disrupts the interaction of CASTOR1-containing dimers with GATOR2 which can in turn activate mTORC1 and the TORC1 signaling pathway. The chain is Cytosolic arginine sensor for mTORC1 subunit 1 from Mus musculus (Mouse).